Consider the following 317-residue polypeptide: Xylose/arabinose import permease protein XacH (317 aa).

The next 6 helical transmembrane spans lie at 40-60, 98-118, 132-152, 179-199, 241-261, and 290-310; these read GIPFVLMSIAVYGGTGYNFAI, LVLLVGFTTICLVLGLFLAIL, VYLLPMSLSFVVTAQLWLWMF, IALGAVILALIWQFSGYTMVV, AAVVLMVFALKAFTFLYALVG, and AAIATMLLIMALGVIGPYLYY. Positions 94–309 constitute an ABC transmembrane type-1 domain; that stretch reads AQNNLVLLVG…ALGVIGPYLY (216 aa).

Belongs to the binding-protein-dependent transport system permease family. The complex is composed of two ATP-binding proteins (XacJ and XacK), two transmembrane proteins (XacH and XacI) and a solute-binding protein (XacG).

It localises to the cell membrane. Its function is as follows. Part of the ABC transporter complex XacGHIJK involved in the uptake of xylose and arabinose. Responsible for the translocation of the substrate across the membrane. This Haloferax volcanii (strain ATCC 29605 / DSM 3757 / JCM 8879 / NBRC 14742 / NCIMB 2012 / VKM B-1768 / DS2) (Halobacterium volcanii) protein is Xylose/arabinose import permease protein XacH.